The following is a 302-amino-acid chain: Uroporphyrinogen-III synthase, chloroplastic (302 aa).

The disordered stretch occupies residues 1-39 (MALSSSSHLLPFSRPPATFPRARHAGGGRGRAGATGRFI). The N-terminal 50 residues, 1-50 (MALSSSSHLLPFSRPPATFPRARHAGGGRGRAGATGRFIACSSPPPPDVV), are a transit peptide targeting the chloroplast.

Belongs to the uroporphyrinogen-III synthase family.

The protein resides in the plastid. Its subcellular location is the chloroplast. The enzyme catalyses hydroxymethylbilane = uroporphyrinogen III + H2O. The protein operates within porphyrin-containing compound metabolism; protoporphyrin-IX biosynthesis; coproporphyrinogen-III from 5-aminolevulinate: step 3/4. Its function is as follows. Catalyzes cyclization of the linear tetrapyrrole, hydroxymethylbilane, to the macrocyclic uroporphyrinogen III, a precursor of tetrapyrroles such as chlorophyll, heme and phycobilins. This Oryza sativa subsp. japonica (Rice) protein is Uroporphyrinogen-III synthase, chloroplastic (UROS).